Reading from the N-terminus, the 164-residue chain is Oocyte-expressed protein homolog (164 aa).

One can recognise a KH; atypical domain in the interval 44 to 105 (PLVLYMEAWV…SAQTRMKNIL (62 aa)).

This sequence belongs to the KHDC1 family. In terms of assembly, component of the subcortical maternal complex (SCMC), at least composed of NLRP5, KHDC3, OOEP, and TLE6. Within the complex, interacts with NLRP5, KHDC3 and TLE6. The SCMC may facilitate translocation of its components between the nuclear and cytoplasmic compartments. As part of the SCMC interacts with the SCMC-associated protein NLRP4F. Forms a scaffold complex with KHDC3/FILIA, and interacts with BLM and TRIM25 at DNA replication forks. In terms of tissue distribution, expressed in ovaries, where it is restricted to growing oocytes, with greatest levels in fully grown oocytes.

The protein localises to the cytoplasm. Its subcellular location is the nucleus. Functionally, component of the subcortical maternal complex (SCMC), a multiprotein complex that plays a key role in early embryonic development. The SCMC complex is a structural constituent of cytoplasmic lattices, which consist in fibrous structures found in the cytoplasm of oocytes and preimplantation embryos. They are required to store maternal proteins critical for embryonic development, such as proteins that control epigenetic reprogramming of the preimplantation embryo, and prevent their degradation or activation. As part of the OOEP-KHDC3 scaffold, recruits BLM and TRIM25 to DNA replication forks, thereby promoting the ubiquitination of BLM by TRIM25, enhancing BLM retainment at replication forks and therefore promoting stalled replication fork restart. Positively regulates the homologous recombination-mediated DNA double-strand break (DSB) repair pathway by regulating ATM activation and RAD51 recruitment to DSBs in oocytes. Thereby contributes to oocyte survival and the resumption and completion of meiosis. The polypeptide is Oocyte-expressed protein homolog (Mus musculus (Mouse)).